Here is a 624-residue protein sequence, read N- to C-terminus: Chaperone protein HtpG (624 aa).

The interval methionine 1–arginine 336 is a; substrate-binding. Residues glutamate 337–lysine 552 are b. Positions leucine 553 to alanine 624 are c.

Belongs to the heat shock protein 90 family. Homodimer.

Its subcellular location is the cytoplasm. Its function is as follows. Molecular chaperone. Has ATPase activity. This chain is Chaperone protein HtpG, found in Yersinia pestis bv. Antiqua (strain Antiqua).